Here is a 410-residue protein sequence, read N- to C-terminus: Peptidase T (410 aa).

His-79 contributes to the Zn(2+) binding site. Residue Asp-81 is part of the active site. Asp-142 lines the Zn(2+) pocket. Glu-176 functions as the Proton acceptor in the catalytic mechanism. Glu-177, Asp-199, and His-381 together coordinate Zn(2+).

It belongs to the peptidase M20B family. Requires Zn(2+) as cofactor.

Its subcellular location is the cytoplasm. The enzyme catalyses Release of the N-terminal residue from a tripeptide.. In terms of biological role, cleaves the N-terminal amino acid of tripeptides. The protein is Peptidase T of Bacillus thuringiensis (strain Al Hakam).